A 519-amino-acid polypeptide reads, in one-letter code: Steroid 17-alpha-hydroxylase/17,20 lyase (519 aa).

Cysteine 455 serves as a coordination point for heme.

Belongs to the cytochrome P450 family. Heme serves as cofactor.

Its subcellular location is the membrane. The enzyme catalyses a C21-steroid + reduced [NADPH--hemoprotein reductase] + O2 = a 17alpha-hydroxy-C21-steroid + oxidized [NADPH--hemoprotein reductase] + H2O + H(+). The catalysed reaction is 17alpha-hydroxyprogesterone + reduced [NADPH--hemoprotein reductase] + O2 = androst-4-ene-3,17-dione + acetate + oxidized [NADPH--hemoprotein reductase] + H2O + 2 H(+). It carries out the reaction 17alpha-hydroxypregnenolone + reduced [NADPH--hemoprotein reductase] + O2 = 3beta-hydroxyandrost-5-en-17-one + acetate + oxidized [NADPH--hemoprotein reductase] + H2O + 2 H(+). It participates in lipid metabolism; steroid biosynthesis. Functionally, conversion of pregnenolone and progesterone to their 17-alpha-hydroxylated products and subsequently to dehydroepiandrosterone (DHEA) and androstenedione. Catalyzes both the 17-alpha-hydroxylation and the 17,20-lyase reaction. The sequence is that of Steroid 17-alpha-hydroxylase/17,20 lyase (CYP17A1) from Rana dybowskii (Dybovsky's frog).